Reading from the N-terminus, the 54-residue chain is Large ribosomal subunit protein bL33 (54 aa).

It belongs to the bacterial ribosomal protein bL33 family.

This Herpetosiphon aurantiacus (strain ATCC 23779 / DSM 785 / 114-95) protein is Large ribosomal subunit protein bL33.